The primary structure comprises 213 residues: Protein FAM156A/FAM156B (213 aa).

Met1 is modified (N-acetylmethionine). Positions Met1–Leu62 are disordered. The segment covering Asn8–Glu37 has biased composition (polar residues). Phosphoserine is present on Ser114. A helical transmembrane segment spans residues Trp154–Thr170. The tract at residues Thr165 to Ser198 is disordered. A compositionally biased stretch (basic and acidic residues) spans Thr186 to Glu197.

It is found in the membrane. The polypeptide is Protein FAM156A/FAM156B (FAM156A) (Homo sapiens (Human)).